The sequence spans 323 residues: Fructose-1,6-bisphosphatase class 1 (323 aa).

Mg(2+) is bound by residues Glu88, Asp107, Leu109, and Asp110. Residues 110–113 (DGSS) and Asn200 each bind substrate. Glu272 lines the Mg(2+) pocket.

It belongs to the FBPase class 1 family. Homotetramer. Mg(2+) serves as cofactor.

It is found in the cytoplasm. The enzyme catalyses beta-D-fructose 1,6-bisphosphate + H2O = beta-D-fructose 6-phosphate + phosphate. It functions in the pathway carbohydrate biosynthesis; gluconeogenesis. This is Fructose-1,6-bisphosphatase class 1 from Acinetobacter baumannii (strain ACICU).